The following is a 231-amino-acid chain: MQKLIVFFTTIAAAQAFLLPSGGGGGCGCAPPPPPPPCGCGAPALPPLQLPRFELPRLSLPSLGGGCGGPAPCAAAPIAAPAGGYATAPAAPVGGYATGPAFGGAAPIGGAYQAAPAFVGAAPVGGAYQSGPAFGGAAPAGGAYQSGPAFGGAAPAGGAYQSGPAFGGAAPAVGGAYQAGQAAVESAPLGGAAPAGGYQASAPAAVEAAPAAGGYQAAAPAGGAYAGHKKN.

The N-terminal stretch at 1 to 16 (MQKLIVFFTTIAAAQA) is a signal peptide. Repeat copies occupy residues 75–78 (AAPI), 79–82 (AAPA), 90–93 (AAPV), 105–108 (AAPI), 114–117 (AAPA), 121–124 (AAPV), 137–140 (AAPA), 153–156 (AAPA), 169–172 (AAPA), 192–195 (AAPA), 208–211 (AAPA), and 218–221 (AAPA). Residues 75-221 (AAPIAAPAGG…AGGYQAAAPA (147 aa)) are 12 X 4 AA repeats of A-A-P-[AVI].

In terms of processing, tyrosine residues can be cross-linked in vitro, leading to the formation of insoluble high molecular-weight complexes.

The protein resides in the secreted. Functionally, component of the insoluble part of the cuticles. The chain is Cuticlin 2 from Caenorhabditis elegans.